The chain runs to 294 residues: Elongation factor Ts (294 aa).

The involved in Mg(2+) ion dislocation from EF-Tu stretch occupies residues 81 to 84 (TDFV).

It belongs to the EF-Ts family.

The protein localises to the cytoplasm. Associates with the EF-Tu.GDP complex and induces the exchange of GDP to GTP. It remains bound to the aminoacyl-tRNA.EF-Tu.GTP complex up to the GTP hydrolysis stage on the ribosome. The sequence is that of Elongation factor Ts (tsf) from Mycoplasmopsis pulmonis (strain UAB CTIP) (Mycoplasma pulmonis).